We begin with the raw amino-acid sequence, 247 residues long: Membrane-spanning 4-domains subfamily A member 6D (247 aa).

The Cytoplasmic portion of the chain corresponds to 1–46 (MIPQVVTSETVTVISPNGISFPQTDKPQPSHQSQDSLKKHLKAEIK). Residues 47–67 (VMAAIQIMCAVMVLSLGIILA) traverse the membrane as a helical segment. Residues 68 to 80 (SVPSNLHFTSVFS) lie on the Extracellular side of the membrane. Residues 81 to 101 (ILLESGYPFVGALFFAISGIL) traverse the membrane as a helical segment. At 102–121 (SIVTEKKMTKPLVHSSLALS) the chain is on the cytoplasmic side. The helical transmembrane segment at 122 to 142 (ILSVLSALTGIAILSVSLAAL) threads the bilayer. Residues 143–180 (EPALQQCKLAFTQLDTTQDAYHFFSPEPLNSCFVAKAA) are Extracellular-facing. Residues 181 to 201 (LTGVFSLMLISSVLELGLAVL) form a helical membrane-spanning segment. The Cytoplasmic segment spans residues 202–247 (TATLWWKQSSSAFSGNVIFLSQNSKNKSSVSSESLCNPTYENILTS). Ser235 is modified (phosphoserine).

Belongs to the MS4A family. Expressed in thymus, spleen, intestine, colon, testis, heart, liver, brain, kidney, peripheral lymph node and bone marrow.

It is found in the membrane. In terms of biological role, may be involved in signal transduction as a component of a multimeric receptor complex. This chain is Membrane-spanning 4-domains subfamily A member 6D (Ms4a6d), found in Mus musculus (Mouse).